We begin with the raw amino-acid sequence, 397 residues long: Probable peptidoglycan glycosyltransferase FtsW (397 aa).

Over 1 to 30 (MYGLEMLEKIKLEYDKWACLTPKNSLYDRT) the chain is Cytoplasmic. Residues 31–51 (LVWLFLSLLMIGFIMVTSASI) traverse the membrane as a helical segment. The Periplasmic portion of the chain corresponds to 52 to 61 (PVSTRLNNDP). A helical transmembrane segment spans residues 62–82 (FHFAIRDSIYLACSLLAFAFV). Topologically, residues 83–94 (VKIPMRNWEKYN) are cytoplasmic. The chain crosses the membrane as a helical span at residues 95–115 (VPLFLLSLLFLASVLIFGRSV). Topologically, residues 116-126 (NGSIRWIQLGP) are periplasmic. Residues 127-146 (INFQPAELSKLAIICYFSSF) traverse the membrane as a helical segment. The Cytoplasmic portion of the chain corresponds to 147 to 158 (YVRKYDEMRNRS). Transmembrane regions (helical) follow at residues 159–179 (ASVIRPMVILFLFSSLLLLQP) and 180–200 (DLGSVVVLFVLTFTMLFIMGA). K201 is a topological domain (cytoplasmic). The helical transmembrane segment at 202 to 222 (VMQFLLLIVTASVSFILLVLT) threads the bilayer. Topologically, residues 223-280 (SEYRLKRVTSFLDPFADAYGDGFQLSNAQMAFGQGQLWGQGLGNSVQKLEYLPEAHTD) are periplasmic. Residues 281-301 (FVMAVVAEEFGFIGIIFMVVL) form a helical membrane-spanning segment. Over 302 to 325 (LLCLSFRAIKISRDALKLEARFRG) the chain is Cytoplasmic. Residues 326–346 (FFAFGVAIWVFLQGSVNLGVA) traverse the membrane as a helical segment. Residues 347–356 (SGALPTKGLT) lie on the Periplasmic side of the membrane. The chain crosses the membrane as a helical span at residues 357–377 (FPLVSYGGSSLVIMSVAIAIL). Over 378 to 397 (LRIDYENRLTRVGHAQIKEP) the chain is Cytoplasmic.

Belongs to the SEDS family. FtsW subfamily.

The protein resides in the cell inner membrane. It catalyses the reaction [GlcNAc-(1-&gt;4)-Mur2Ac(oyl-L-Ala-gamma-D-Glu-L-Lys-D-Ala-D-Ala)](n)-di-trans,octa-cis-undecaprenyl diphosphate + beta-D-GlcNAc-(1-&gt;4)-Mur2Ac(oyl-L-Ala-gamma-D-Glu-L-Lys-D-Ala-D-Ala)-di-trans,octa-cis-undecaprenyl diphosphate = [GlcNAc-(1-&gt;4)-Mur2Ac(oyl-L-Ala-gamma-D-Glu-L-Lys-D-Ala-D-Ala)](n+1)-di-trans,octa-cis-undecaprenyl diphosphate + di-trans,octa-cis-undecaprenyl diphosphate + H(+). It participates in cell wall biogenesis; peptidoglycan biosynthesis. In terms of biological role, peptidoglycan polymerase that is essential for cell division. In Haemophilus ducreyi (strain 35000HP / ATCC 700724), this protein is Probable peptidoglycan glycosyltransferase FtsW.